An 89-amino-acid chain; its full sequence is Small ribosomal subunit protein uS15 (89 aa).

A compositionally biased stretch (basic and acidic residues) spans 1-21; it reads MVLDPTQKKSVIDAHAKHEGD. Residues 1 to 24 are disordered; sequence MVLDPTQKKSVIDAHAKHEGDTGS.

It belongs to the universal ribosomal protein uS15 family. As to quaternary structure, part of the 30S ribosomal subunit. Forms a bridge to the 50S subunit in the 70S ribosome, contacting the 23S rRNA.

Functionally, one of the primary rRNA binding proteins, it binds directly to 16S rRNA where it helps nucleate assembly of the platform of the 30S subunit by binding and bridging several RNA helices of the 16S rRNA. Its function is as follows. Forms an intersubunit bridge (bridge B4) with the 23S rRNA of the 50S subunit in the ribosome. The protein is Small ribosomal subunit protein uS15 of Desulfovibrio desulfuricans (strain ATCC 27774 / DSM 6949 / MB).